The primary structure comprises 335 residues: tRNA N6-adenosine threonylcarbamoyltransferase (335 aa).

2 residues coordinate Fe cation: His-110 and His-114. Substrate-binding positions include 132–136, Asp-165, Gly-178, and Asn-271; that span reads LVSGG. Asp-299 serves as a coordination point for Fe cation.

It belongs to the KAE1 / TsaD family. Fe(2+) is required as a cofactor.

The protein localises to the cytoplasm. It carries out the reaction L-threonylcarbamoyladenylate + adenosine(37) in tRNA = N(6)-L-threonylcarbamoyladenosine(37) in tRNA + AMP + H(+). Required for the formation of a threonylcarbamoyl group on adenosine at position 37 (t(6)A37) in tRNAs that read codons beginning with adenine. Is involved in the transfer of the threonylcarbamoyl moiety of threonylcarbamoyl-AMP (TC-AMP) to the N6 group of A37, together with TsaE and TsaB. TsaD likely plays a direct catalytic role in this reaction. The polypeptide is tRNA N6-adenosine threonylcarbamoyltransferase (Campylobacter jejuni subsp. jejuni serotype O:2 (strain ATCC 700819 / NCTC 11168)).